The sequence spans 534 residues: Beta-glucosidase 32 (534 aa).

The signal sequence occupies residues 1–22; it reads MAIKLIALVITICVASWDSAQG. Gln-51 provides a ligand contact to a beta-D-glucoside. An N-linked (GlcNAc...) asparagine glycan is attached at Asn-68. Residues His-154 and 199–200 contribute to the a beta-D-glucoside site; that span reads NE. The active-site Proton donor is the Glu-200. A disulfide bridge links Cys-219 with Cys-227. Position 344 (Tyr-344) interacts with a beta-D-glucoside. An N-linked (GlcNAc...) asparagine glycan is attached at Asn-374. Glu-417 provides a ligand contact to a beta-D-glucoside. Glu-417 (nucleophile) is an active-site residue. An N-linked (GlcNAc...) asparagine glycan is attached at Asn-425. A beta-D-glucoside is bound by residues Trp-467, 474–475, and Phe-483; that span reads EW.

It belongs to the glycosyl hydrolase 1 family.

The enzyme catalyses Hydrolysis of terminal, non-reducing beta-D-glucosyl residues with release of beta-D-glucose.. The protein is Beta-glucosidase 32 of Arabidopsis thaliana (Mouse-ear cress).